The sequence spans 287 residues: Protease HtpX (287 aa).

The next 2 helical transmembrane spans lie at 4–24 (IFLLIATNLAVLLVASIVMSI) and 33–53 (GGLLVFAAIFGFGGAFISLAI). Zn(2+) is bound at residue histidine 139. Glutamate 140 is a catalytic residue. Histidine 143 serves as a coordination point for Zn(2+). A run of 2 helical transmembrane segments spans residues 154–174 (LIQGVVNTFVIFAARVVAGII) and 195–215 (AVVFVLDMLFGILASIIVAYF). Glutamate 220 contacts Zn(2+).

Belongs to the peptidase M48B family. Zn(2+) serves as cofactor.

The protein localises to the cell inner membrane. This chain is Protease HtpX, found in Shewanella sp. (strain MR-4).